The primary structure comprises 640 residues: DNA topoisomerase 3 (640 aa).

Positions 21–175 (RVLCVAEKNS…WRAQFSHLEP (155 aa)) constitute a Toprim domain. Mg(2+) is bound by residues E27, D137, and D139. The region spanning 189–618 (DMKLVAAVEC…QLLPLYKEAF (430 aa)) is the Topo IA-type catalytic domain. Y354 serves as the catalytic O-(5'-phospho-DNA)-tyrosine intermediate.

This sequence belongs to the type IA topoisomerase family. Requires Mg(2+) as cofactor.

It catalyses the reaction ATP-independent breakage of single-stranded DNA, followed by passage and rejoining.. Functionally, introduces a single-strand break via transesterification at a target site in duplex DNA. Releases the supercoiling and torsional tension of DNA introduced during the DNA replication and transcription by transiently cleaving and rejoining one strand of the DNA duplex. The scissile phosphodiester is attacked by the catalytic tyrosine of the enzyme, resulting in the formation of a DNA-(5'-phosphotyrosyl)-enzyme intermediate and the expulsion of a 3'-OH DNA strand. This chain is DNA topoisomerase 3 (TOP3), found in Candidozyma auris (Yeast).